We begin with the raw amino-acid sequence, 424 residues long: 3-ketoacyl-CoA thiolase B, peroxisomal (424 aa).

The N-terminal 26 residues, 1 to 26 (MHRLQVVLGHLAGRPESSSALQAAPC), are a transit peptide targeting the peroxisome. The PTS2-type peroxisomal targeting signal stretch occupies residues 1 to 26 (MHRLQVVLGHLAGRPESSSALQAAPC). Cys-123 acts as the Acyl-thioester intermediate in catalysis. Residues Lys-173 and Lys-234 each carry the N6-acetyllysine modification. The CoA site is built by Arg-249, Thr-252, and Ser-276. Cys-408 functions as the Proton donor/acceptor in the catalytic mechanism.

The protein belongs to the thiolase-like superfamily. Thiolase family. Homodimer. Interacts (via PTS2-type peroxisomal targeting signal region) with PEX7; leading to its translocation into peroxisomes. Mainly expressed in liver; weaker levels in kidney, intestine and white adipose tissue.

The protein resides in the peroxisome. It catalyses the reaction an acyl-CoA + acetyl-CoA = a 3-oxoacyl-CoA + CoA. It carries out the reaction 2 acetyl-CoA = acetoacetyl-CoA + CoA. The catalysed reaction is hexanoyl-CoA + acetyl-CoA = 3-oxooctanoyl-CoA + CoA. The enzyme catalyses tetradecanoyl-CoA + acetyl-CoA = 3-oxohexadecanoyl-CoA + CoA. It catalyses the reaction 3-oxohexadecanedioyl-CoA + CoA = tetradecanedioyl-CoA + acetyl-CoA. It carries out the reaction 3-oxo-(6Z,9Z,12Z,15Z,18Z,21Z)-tetracosahexaenoyl-CoA + CoA = (4Z,7Z,10Z,13Z,16Z,19Z)-docosahexaenoyl-CoA + acetyl-CoA. It functions in the pathway lipid metabolism; peroxisomal fatty acid beta-oxidation. Functionally, responsible for the thiolytic cleavage of straight chain 3-keto fatty acyl-CoAs (3-oxoacyl-CoAs). Plays an important role in fatty acid peroxisomal beta-oxidation. Catalyzes the cleavage of short, medium, long, and very long straight chain 3-oxoacyl-CoAs. The protein is 3-ketoacyl-CoA thiolase B, peroxisomal of Mus musculus (Mouse).